The following is a 164-amino-acid chain: MAQRDKKDQEPTELRAPEITLCANSCGFPGNPATQNLCQNCFLAATASTSSPSSLSSPVLDKQPPRPAAPLVEPQAPLPPPVEEMASALATAPAPVAKTSAVNRCSRCRKRVGLTGFRCRCGHLFCGEHRYSDRHGCSYDYKSAARDAIARDNPVVRAAKIVRF.

An A20-type zinc finger spans residues 16–50 (APEITLCANSCGFPGNPATQNLCQNCFLAATASTS). Zn(2+) is bound by residues Cys22, Cys26, Cys38, and Cys41. The segment covering 48 to 58 (STSSPSSLSSP) has biased composition (low complexity). Positions 48–81 (STSSPSSLSSPVLDKQPPRPAAPLVEPQAPLPPP) are disordered. An AN1-type zinc finger spans residues 99-145 (TSAVNRCSRCRKRVGLTGFRCRCGHLFCGEHRYSDRHGCSYDYKSAA). Zn(2+)-binding residues include Cys105, Cys108, Cys119, Cys121, Cys126, His129, His135, and Cys137.

Its function is as follows. May be involved in environmental stress response. The polypeptide is Zinc finger A20 and AN1 domain-containing stress-associated protein 1 (SAP1) (Oryza sativa subsp. indica (Rice)).